The chain runs to 177 residues: Thioredoxin M-type, chloroplastic (177 aa).

Residues 1-64 constitute a chloroplast transit peptide; the sequence is MAAFTCTSSP…SRLRRGGIIC (64 aa). A Thioredoxin domain is found at 65-177; the sequence is EAQDTATGIP…LATSIDKFLQ (113 aa). Residues cysteine 101 and cysteine 104 each act as nucleophile in the active site. A disulfide bond links cysteine 101 and cysteine 104.

It belongs to the thioredoxin family. Plant M-type subfamily. Forms a complex with heterodimeric ferredoxin-thioredoxin reductase (FTR) and ferredoxin.

Its subcellular location is the plastid. It is found in the chloroplast. Functionally, participates in various redox reactions through the reversible oxidation of the active center dithiol to a disulfide. The M form is known to activate NADP-malate dehydrogenase. This Brassica napus (Rape) protein is Thioredoxin M-type, chloroplastic.